The chain runs to 487 residues: Cytochrome P450 2C21 (487 aa).

Cysteine 432 is a heme binding site.

It belongs to the cytochrome P450 family. Heme is required as a cofactor. As to expression, liver.

It localises to the endoplasmic reticulum membrane. The protein resides in the microsome membrane. The enzyme catalyses an organic molecule + reduced [NADPH--hemoprotein reductase] + O2 = an alcohol + oxidized [NADPH--hemoprotein reductase] + H2O + H(+). Cytochromes P450 are a group of heme-thiolate monooxygenases. In liver microsomes, this enzyme is involved in an NADPH-dependent electron transport pathway. It oxidizes a variety of structurally unrelated compounds, including steroids, fatty acids, and xenobiotics. Showed testosterone hydrolase activity. The chain is Cytochrome P450 2C21 (CYP2C21) from Canis lupus familiaris (Dog).